We begin with the raw amino-acid sequence, 167 residues long: Large ribosomal subunit protein uL10 (167 aa).

Belongs to the universal ribosomal protein uL10 family. Part of the ribosomal stalk of the 50S ribosomal subunit. The N-terminus interacts with L11 and the large rRNA to form the base of the stalk. The C-terminus forms an elongated spine to which L12 dimers bind in a sequential fashion forming a multimeric L10(L12)X complex.

Functionally, forms part of the ribosomal stalk, playing a central role in the interaction of the ribosome with GTP-bound translation factors. The sequence is that of Large ribosomal subunit protein uL10 from Chromohalobacter salexigens (strain ATCC BAA-138 / DSM 3043 / CIP 106854 / NCIMB 13768 / 1H11).